A 207-amino-acid polypeptide reads, in one-letter code: Thiamine-phosphate synthase (207 aa).

4-amino-2-methyl-5-(diphosphooxymethyl)pyrimidine contacts are provided by residues 38–42 (QYRAK) and N70. Positions 71 and 90 each coordinate Mg(2+). T109 contacts 4-amino-2-methyl-5-(diphosphooxymethyl)pyrimidine. Position 135-137 (135-137 (TNS)) interacts with 2-[(2R,5Z)-2-carboxy-4-methylthiazol-5(2H)-ylidene]ethyl phosphate. Position 138 (K138) interacts with 4-amino-2-methyl-5-(diphosphooxymethyl)pyrimidine. Residues G165 and 185 to 186 (IS) each bind 2-[(2R,5Z)-2-carboxy-4-methylthiazol-5(2H)-ylidene]ethyl phosphate.

It belongs to the thiamine-phosphate synthase family. Mg(2+) is required as a cofactor.

The catalysed reaction is 2-[(2R,5Z)-2-carboxy-4-methylthiazol-5(2H)-ylidene]ethyl phosphate + 4-amino-2-methyl-5-(diphosphooxymethyl)pyrimidine + 2 H(+) = thiamine phosphate + CO2 + diphosphate. It carries out the reaction 2-(2-carboxy-4-methylthiazol-5-yl)ethyl phosphate + 4-amino-2-methyl-5-(diphosphooxymethyl)pyrimidine + 2 H(+) = thiamine phosphate + CO2 + diphosphate. It catalyses the reaction 4-methyl-5-(2-phosphooxyethyl)-thiazole + 4-amino-2-methyl-5-(diphosphooxymethyl)pyrimidine + H(+) = thiamine phosphate + diphosphate. The protein operates within cofactor biosynthesis; thiamine diphosphate biosynthesis; thiamine phosphate from 4-amino-2-methyl-5-diphosphomethylpyrimidine and 4-methyl-5-(2-phosphoethyl)-thiazole: step 1/1. Condenses 4-methyl-5-(beta-hydroxyethyl)thiazole monophosphate (THZ-P) and 2-methyl-4-amino-5-hydroxymethyl pyrimidine pyrophosphate (HMP-PP) to form thiamine monophosphate (TMP). In Clostridium perfringens (strain 13 / Type A), this protein is Thiamine-phosphate synthase.